Here is a 129-residue protein sequence, read N- to C-terminus: Ribosome-binding factor A (129 aa).

It belongs to the RbfA family. In terms of assembly, monomer. Binds 30S ribosomal subunits, but not 50S ribosomal subunits or 70S ribosomes.

It is found in the cytoplasm. One of several proteins that assist in the late maturation steps of the functional core of the 30S ribosomal subunit. Associates with free 30S ribosomal subunits (but not with 30S subunits that are part of 70S ribosomes or polysomes). Required for efficient processing of 16S rRNA. May interact with the 5'-terminal helix region of 16S rRNA. This Ectopseudomonas mendocina (strain ymp) (Pseudomonas mendocina) protein is Ribosome-binding factor A.